The chain runs to 382 residues: Intermediate transcription factor 3 large subunit (382 aa).

Belongs to the poxviruses A23 family. Heterodimer of a 45 kDa and a 32 kDa subunit.

Functionally, acts with RNA polymerase to initiate transcription from intermediate gene promoters. The sequence is that of Intermediate transcription factor 3 large subunit (VITF3L) from Oryctolagus cuniculus (Rabbit).